The chain runs to 319 residues: HTH-type transcriptional regulator YidZ (319 aa).

The 58-residue stretch at 8–65 (LDLNLLLCLQLLMQERSVTKAAKRMNVTPSAVSKSLAKLRAWFDDPLFVNSPLGLSPT) folds into the HTH lysR-type domain. The segment at residues 25 to 44 (VTKAAKRMNVTPSAVSKSLA) is a DNA-binding region (H-T-H motif).

It belongs to the LysR transcriptional regulatory family.

In terms of biological role, involved in anaerobic NO protection. The polypeptide is HTH-type transcriptional regulator YidZ (Escherichia coli O157:H7 (strain EC4115 / EHEC)).